A 205-amino-acid chain; its full sequence is High frequency lysogenization protein HflD homolog (205 aa).

It belongs to the HflD family.

The protein localises to the cytoplasm. It localises to the cell inner membrane. In Haemophilus influenzae (strain 86-028NP), this protein is High frequency lysogenization protein HflD homolog.